The following is a 332-amino-acid chain: Adenosine deaminase (332 aa).

Zn(2+) contacts are provided by histidine 12 and histidine 14. Residues histidine 14, aspartate 16, and glycine 170 each contribute to the substrate site. A Zn(2+)-binding site is contributed by histidine 197. Glutamate 200 functions as the Proton donor in the catalytic mechanism. Aspartate 278 provides a ligand contact to Zn(2+). Aspartate 279 serves as a coordination point for substrate.

This sequence belongs to the metallo-dependent hydrolases superfamily. Adenosine and AMP deaminases family. Adenosine deaminase subfamily. It depends on Zn(2+) as a cofactor.

The enzyme catalyses adenosine + H2O + H(+) = inosine + NH4(+). It catalyses the reaction 2'-deoxyadenosine + H2O + H(+) = 2'-deoxyinosine + NH4(+). Its function is as follows. Catalyzes the hydrolytic deamination of adenosine and 2-deoxyadenosine. The polypeptide is Adenosine deaminase (Erwinia tasmaniensis (strain DSM 17950 / CFBP 7177 / CIP 109463 / NCPPB 4357 / Et1/99)).